A 427-amino-acid chain; its full sequence is MLDLKLIRQKPEWAKEKLAARAIKGEEIDELLALDTRRRQVTVQTEELKAKRNDVSGQIAVMKRNKENADDQIKAMREVGQKIAALDKELAQLNEKVTYILVRLPNFPADDVPMSLNEDDSREEYKWGNMPTFDFEPKHHWDIGEKLGILDFERAAKVAGSRFVYYKGAGARLERAVYNFFLDEHQKEGYEEIIPPYLVNNDSMFGTGQFPKFTDATYTITNDGEPLTLIPTAEVPLVNYYRNDIVDAEKLPVNFTALTPAFRSEAGSAGRDTRGLIRMHQFNKVEMVKFCKPEDSWKQLQNLIHDAEDLLQKLGLPYHVITLASNDASFTSAKTNDLEVWMPAQDRYREISSCSNCTDFQARRAQIRYRDDDGKLQFVHTLNGSGLAVGRTVASILENYQQADGSVKIPDVLVPYMQGQTAITKED.

Position 232–234 (232–234 (TAE)) interacts with L-serine. 263–265 (RSE) is an ATP binding site. Residue glutamate 286 coordinates L-serine. 350 to 353 (EISS) is an ATP binding site. L-serine is bound at residue serine 385.

The protein belongs to the class-II aminoacyl-tRNA synthetase family. Type-1 seryl-tRNA synthetase subfamily. As to quaternary structure, homodimer. The tRNA molecule binds across the dimer.

The protein localises to the cytoplasm. It catalyses the reaction tRNA(Ser) + L-serine + ATP = L-seryl-tRNA(Ser) + AMP + diphosphate + H(+). The enzyme catalyses tRNA(Sec) + L-serine + ATP = L-seryl-tRNA(Sec) + AMP + diphosphate + H(+). It functions in the pathway aminoacyl-tRNA biosynthesis; selenocysteinyl-tRNA(Sec) biosynthesis; L-seryl-tRNA(Sec) from L-serine and tRNA(Sec): step 1/1. Catalyzes the attachment of serine to tRNA(Ser). Is also able to aminoacylate tRNA(Sec) with serine, to form the misacylated tRNA L-seryl-tRNA(Sec), which will be further converted into selenocysteinyl-tRNA(Sec). The chain is Serine--tRNA ligase from Lacticaseibacillus casei (strain BL23) (Lactobacillus casei).